The sequence spans 194 residues: Histone H1.0 (194 aa).

Methionine 1 carries the post-translational modification N-acetylmethionine. A compositionally biased stretch (low complexity) spans 1–11 (MTENSTSTPAA). Residues 1–29 (MTENSTSTPAAKPKRAKASKKSTDHPKYS) are disordered. An N-acetylthreonine; in Histone H1.0, N-terminally processed modification is found at threonine 2. The region spanning 24–97 (DHPKYSDMIV…GASGSFRLAK (74 aa)) is the H15 domain. Arginine 42 carries the citrulline modification. Positions 83-194 (QTKGVGASGS…SSAKRTGKKK (112 aa)) are disordered. Serine 104 carries the post-translational modification ADP-ribosylserine. A compositionally biased stretch (basic residues) spans 105-194 (VAFKKTKKEV…SSAKRTGKKK (90 aa)).

Belongs to the histone H1/H5 family. In terms of processing, ADP-ribosylated on Ser-104 in response to DNA damage.

Its subcellular location is the nucleus. It is found in the chromosome. Its function is as follows. Histones H1 are necessary for the condensation of nucleosome chains into higher-order structures. The histones H1.0 are found in cells that are in terminal stages of differentiation or that have low rates of cell division. This Bos taurus (Bovine) protein is Histone H1.0 (H1-0).